Here is an 838-residue protein sequence, read N- to C-terminus: Calmodulin-binding transcription activator 6 (838 aa).

The CG-1 DNA-binding region spans 25–134; sequence VQTMLEEAKS…YRDTQEAATT (110 aa). The stretch at 525–554 is one ANK repeat; the sequence is QGWTALHWAAYYGREKMVAALLSAGARPNL. 3 IQ domains span residues 671 to 700, 713 to 742, and 788 to 817; these read SIIA…IQCR, MRRQ…SVGV, and LERS…THEE. The calmodulin-binding stretch occupies residues 738–760; sequence WSVGVLEKAVLRWRQKRKGFRGL. Residues 802–822 adopt a coiled-coil conformation; the sequence is KKAQQDYRRMKLTHEEAQVNH.

Belongs to the CAMTA family. In terms of tissue distribution, expressed in roots, stems, leaves, sepals, petals, stamen filaments, top of carpels, anthers and siliques, but not in stigmas.

It is found in the nucleus. Functionally, transcription activator that binds calmodulin in a calcium-dependent manner in vitro. Binds to the DNA consensus sequence 5'-[ACG]CGCG[GTC]-3'. Regulates transcriptional activity in response to calcium signals. The chain is Calmodulin-binding transcription activator 6 from Arabidopsis thaliana (Mouse-ear cress).